A 384-amino-acid chain; its full sequence is Deoxyguanosinetriphosphate triphosphohydrolase-like protein (384 aa).

The HD domain maps to 62 to 198 (RLTHSLEVST…AALADDISYI (137 aa)).

This sequence belongs to the dGTPase family. Type 2 subfamily.

This is Deoxyguanosinetriphosphate triphosphohydrolase-like protein from Rickettsia conorii (strain ATCC VR-613 / Malish 7).